The primary structure comprises 751 residues: C2 domain-containing protein At1g53590 (751 aa).

Helical transmembrane passes span 2-22 and 26-46; these read ESSL…ISSL and HAFF…RYVM. The SMP-LTD domain occupies 68 to 262; the sequence is DSESVRWMNY…QPNMLVVDME (195 aa). The region spanning 267-381 is the C2 domain; sequence PTSENWFFVD…RGGQRNDMWL (115 aa). Positions 298, 304, 352, 354, and 359 each coordinate Ca(2+). Disordered regions lie at residues 469–519 and 572–751; these read QIWE…GRGL and SGPL…SSSK. The segment covering 472–482 has biased composition (basic and acidic residues); the sequence is EPRKGKSRRLD. Over residues 483–502 the composition is skewed to polar residues; that stretch reads SQIQRTPNDESLSNGSSSTD. A compositionally biased stretch (basic and acidic residues) spans 590–611; that stretch reads NSGKGHMKDVAKSFLKQAEKSA. Residues 612–624 are compositionally biased toward basic residues; sequence KQIKHAFSRKGSM. The span at 625–634 shows a compositional bias: basic and acidic residues; that stretch reads KPRDGHKEIV. Over residues 639–651 the composition is skewed to acidic residues; it reads SGTDSESSDDDDA. Basic and acidic residues-rich tracts occupy residues 664–681 and 703–751; these read KLTR…DHVD and VEAK…SSSK. Residues 701-728 adopt a coiled-coil conformation; that stretch reads TDVEAKEEKLKEAAESETRDMDTAMNIK.

This sequence belongs to the extended synaptotagmin family. Ca(2+) is required as a cofactor.

It is found in the membrane. The polypeptide is C2 domain-containing protein At1g53590 (NTMC2T6.1) (Arabidopsis thaliana (Mouse-ear cress)).